The primary structure comprises 177 residues: MTKSVIEILSAEEMRRTITRLASQIVEKAGDLTDLALLGIHTRGVPLAENIAKQIETLEGIAVPVGALDITFYRDDLDQIRVRTPSKTDIPFDLNGKNLVLIDDVIYKGRTIRAALNAVNDYGRPEVIRLAVLVDRGHRQLPIQPDFTGKKLPTAKEEKVKVYLQDLDGRDAVELIK.

The PRPP-binding signature appears at 99–111; the sequence is LVLIDDVIYKGRT.

Belongs to the purine/pyrimidine phosphoribosyltransferase family. PyrR subfamily.

The catalysed reaction is UMP + diphosphate = 5-phospho-alpha-D-ribose 1-diphosphate + uracil. Regulates the transcription of the pyrimidine nucleotide (pyr) operon in response to exogenous pyrimidines. Functionally, also displays a weak uracil phosphoribosyltransferase activity which is not physiologically significant. This chain is Bifunctional protein PyrR, found in Picosynechococcus sp. (strain ATCC 27264 / PCC 7002 / PR-6) (Agmenellum quadruplicatum).